Reading from the N-terminus, the 476-residue chain is Protein EARLY HEADING DATE 2 (476 aa).

Residues 1–13 (MLLSDLSSDQEAT) are compositionally biased toward polar residues. Positions 1–27 (MLLSDLSSDQEATGSNSHGGGGGGDRM) are disordered. 2 C2H2-type zinc fingers span residues 106-128 (FVCE…RRGH) and 156-186 (YVCP…SRKH). 2 consecutive short sequence motifs (nuclear localization signal) follow at residues 124-131 (HRRGHNLP) and 178-185 (IKKHFSRK). The C2H2-type 2; degenerate zinc-finger motif lies at 191 to 214 (WRCERCGKRYAVHSDWKAHVKNCG). Residues Cys193, Cys196, His209, Cys213, Cys220, Cys222, His235, and Cys239 each coordinate Zn(2+). The CCHC-type 2; atypical zinc finger occupies 218 to 241 (YRCDCGILFSRKDSLLTHRAFCDA). Residues 228–240 (RKDSLLTHRAFCD) form an SHR-binding region.

It localises to the nucleus. In terms of biological role, transcription activator that acts as a flowering master switch in both long and short days, independently of the circadian clock. Promotes flowering upstream of HD1 by up-regulating FTL1, FTL4, FTL5, FTL6, EHD1, HD3A and RFT1. Seems to repress FTL11 expression. May recognize the consensus motif 5'-TTTGTCGTAAT-3' in target gene promoters. This Oryza sativa subsp. indica (Rice) protein is Protein EARLY HEADING DATE 2.